The chain runs to 156 residues: Oxidized purine nucleoside triphosphate hydrolase (156 aa).

The Nudix hydrolase domain maps to 3–132; sequence TSRLYTLVLV…WFPLLLQKKK (130 aa). T8 contacts 2-oxo-dATP. 8-oxo-dGTP contacts are provided by residues T8, K23, N33, 35–38, and E52; that span reads FGGK. Residues N33 and 35–38 contribute to the 2-oxo-dATP site; that span reads FGGK. The Mg(2+) site is built by G36, E52, E55, E56, and E100. Residues 37-58 carry the Nudix box motif; the sequence is GKVQEGETIEDGAKRELLEESG. Residues E56, E100, and 117–120 contribute to the 8-oxo-dGTP site; that span reads WPDD. 117–120 contacts 2-oxo-dATP; the sequence is WPDD.

This sequence belongs to the Nudix hydrolase family. Monomer. Mg(2+) serves as cofactor. High expression levels detected in thymus, liver, spleen, kidney, testis and large intestine, with lower levels detected in brain, heart, lung and stomach (at protein level). Expressed in kidney, liver and small intestine.

The protein localises to the cytoplasm. It is found in the nucleus. It localises to the nucleus membrane. The protein resides in the cytoplasmic vesicle. Its subcellular location is the secretory vesicle. The protein localises to the acrosome. It catalyses the reaction 2-oxo-dATP + H2O = 2-oxo-dAMP + diphosphate + H(+). The enzyme catalyses 2-oxo-ATP + H2O = 2-oxo-AMP + diphosphate + H(+). It carries out the reaction 8-oxo-dGTP + H2O = 8-oxo-dGMP + diphosphate + H(+). The catalysed reaction is 8-oxo-dATP + H2O = 8-oxo-dAMP + diphosphate + H(+). It catalyses the reaction O(6)-methyl-dGTP + H2O = O(6)-methyl-dGMP + diphosphate + H(+). The enzyme catalyses N(6)-methyl-dATP + H2O = N(6)-methyl-dAMP + diphosphate + H(+). It carries out the reaction N(6)-methyl-ATP + H2O = N(6)-methyl-AMP + diphosphate + H(+). Its function is as follows. Oxidized purine nucleoside triphosphate hydrolase which is a prominent sanitizer of the oxidized nucleotide pool. Catalyzes the hydrolysis of 2-oxo-dATP (2-hydroxy-dATP) into 2-oxo-dAMP. Also has a significant hydrolase activity toward 2-oxo-ATP, 8-oxo-dGTP and 8-oxo-dATP. Through the hydrolysis of oxidized purine nucleoside triphosphates, prevents their incorporation into DNA and the subsequent transversions A:T to C:G and G:C to T:A. Also catalyzes the hydrolysis of methylated purine nucleoside triphosphate preventing their integration into DNA. Through this antimutagenic activity protects cells from oxidative stress. This Mus musculus (Mouse) protein is Oxidized purine nucleoside triphosphate hydrolase (Nudt1).